The primary structure comprises 138 residues: TIKPFACTKCKRRFCSNKELFSHKRIHTGRPFVCAVCGKYFSDRIILQAHQRLHTGEKPFTCTQCHKSFLYKRNLHQHQQIHQKHKPYVCSTCGKQLKSKLTLNQHMKTHSNIKPFACSECSKSFRFKAHLHRHQESH.

C2H2-type zinc fingers lie at residues 5 to 27, 32 to 54, 60 to 82, 88 to 110, and 116 to 138; these read FACT…KRIH, FVCA…QRLH, FTCT…QQIH, YVCS…MKTH, and FACS…QESH.

The protein belongs to the krueppel C2H2-type zinc-finger protein family.

It localises to the nucleus. In terms of biological role, may be involved in transcriptional regulation. The sequence is that of Gastrula zinc finger protein XlCGF44.2 from Xenopus laevis (African clawed frog).